Consider the following 185-residue polypeptide: Ribosome-recycling factor (185 aa).

The protein belongs to the RRF family.

Its subcellular location is the cytoplasm. Functionally, responsible for the release of ribosomes from messenger RNA at the termination of protein biosynthesis. May increase the efficiency of translation by recycling ribosomes from one round of translation to another. This Salinispora arenicola (strain CNS-205) protein is Ribosome-recycling factor.